Reading from the N-terminus, the 338-residue chain is MKFLDKAIIHVIAGNGGHGRTSFRREKYIPKGGPDGGDGGNGGNVWLQTVTNLNTLIDFKFTKIFKAQDGQQGFNKKKTGKKGSDIVIQIPIGTKIIDHNTNEIIEDMIQDKQLVLVAKGGWHGLGNTRFKSSTNRIPIKHTKGTQGEFRILRLELILIAHVGTLGLPNSGKSTLVRNISNAKTKIANYPFTTLKPVLGTVKINHKEFFVIADIPGLIQGASHGIGLGYQFLKHLERCHLLLHIIDISQINFKNTITNIHVILDELKTYNKILHNKPIWFVFNKIDLIDDIDINTKLKSILEKLGSIQQYFLISAIKKTGLKKIVKKIYDFLKNKNLL.

In terms of domain architecture, Obg spans 1–159 (MKFLDKAIIH…RILRLELILI (159 aa)). One can recognise an OBG-type G domain in the interval 160–333 (AHVGTLGLPN…IVKKIYDFLK (174 aa)). GTP is bound by residues 166-173 (GLPNSGKS), 191-195 (FTTLK), 213-216 (DIPG), 283-286 (NKID), and 314-316 (SAI). Mg(2+) is bound by residues serine 173 and threonine 193.

This sequence belongs to the TRAFAC class OBG-HflX-like GTPase superfamily. OBG GTPase family. Monomer. The cofactor is Mg(2+).

Its subcellular location is the cytoplasm. Functionally, an essential GTPase which binds GTP, GDP and possibly (p)ppGpp with moderate affinity, with high nucleotide exchange rates and a fairly low GTP hydrolysis rate. Plays a role in control of the cell cycle, stress response, ribosome biogenesis and in those bacteria that undergo differentiation, in morphogenesis control. In Buchnera aphidicola subsp. Baizongia pistaciae (strain Bp), this protein is GTPase Obg.